A 66-amino-acid polypeptide reads, in one-letter code: MAVPKRKMSRSNTRARRSQWKATAATLTTCENCKAPRQSHQACPQCGQYAGRTYAEAIRTDAVETR.

The span at 1–19 shows a compositional bias: basic residues; it reads MAVPKRKMSRSNTRARRSQ. Residues 1–20 form a disordered region; sequence MAVPKRKMSRSNTRARRSQW.

This sequence belongs to the bacterial ribosomal protein bL32 family.

This is Large ribosomal subunit protein bL32 from Beutenbergia cavernae (strain ATCC BAA-8 / DSM 12333 / CCUG 43141 / JCM 11478 / NBRC 16432 / NCIMB 13614 / HKI 0122).